The sequence spans 147 residues: Mitochondrial import receptor subunit TOM20 homolog (147 aa).

The Mitochondrial intermembrane portion of the chain corresponds to 1–3 (MVV). The helical transmembrane segment at 4 to 26 (VGKTSAIAAGVCGALFLGYCIYF) threads the bilayer. The Cytoplasmic segment spans residues 27-147 (DRKRRSDPNF…AQNLAEDDVE (121 aa)).

Belongs to the Tom20 family. Forms part of the preprotein translocase complex of the outer mitochondrial membrane (TOM complex). Interacts with tom22.

It localises to the mitochondrion outer membrane. In terms of biological role, central component of the receptor complex responsible for the recognition and translocation of cytosolically synthesized mitochondrial preproteins. Together with tom22 functions as the transit peptide receptor at the surface of the mitochondrion outer membrane and facilitates the movement of preproteins into the tom40 translocation pore. The polypeptide is Mitochondrial import receptor subunit TOM20 homolog (tomm20) (Xenopus tropicalis (Western clawed frog)).